Consider the following 304-residue polypeptide: MSYRGLTILGCSSQQPTRHRNHGAYLLRWNGEGLLFDPGEGTQRQFIYANIAPTVVSRIFISHFHGDHCLGLGSMLMRLNLDRVLHPIHCYYPASGKKYFDRLRYSTIYHETIKVIEHPIDREGIVEDFGNFRIESRQLDHLVDTLGWRITEPDTTKFIPEKIKAAGLKGPIMQELINKGQVKVNDTIVHLDDVSYTRKGDSIAVVADSLPCQAIVDLARNARILLCESTYLEEHSHLAKSHYHMTAKQAAEQAKRAEVQQLILTHFSARYNTTEEFVQEAGEIFPNVFAAEEFCSYEFPKNPS.

Zn(2+) contacts are provided by His-63, His-65, Asp-67, His-68, His-141, Asp-208, and His-266. The active-site Proton acceptor is Asp-67.

The protein belongs to the RNase Z family. Homodimer. Zn(2+) is required as a cofactor.

It catalyses the reaction Endonucleolytic cleavage of RNA, removing extra 3' nucleotides from tRNA precursor, generating 3' termini of tRNAs. A 3'-hydroxy group is left at the tRNA terminus and a 5'-phosphoryl group is left at the trailer molecule.. Functionally, zinc phosphodiesterase, which displays some tRNA 3'-processing endonuclease activity. Probably involved in tRNA maturation, by removing a 3'-trailer from precursor tRNA. The polypeptide is Ribonuclease Z (Chlamydia trachomatis serovar D (strain ATCC VR-885 / DSM 19411 / UW-3/Cx)).